Here is a 97-residue protein sequence, read N- to C-terminus: Small cell adhesion glycoprotein (97 aa).

The Extracellular segment spans residues 1 to 36 (MTSFPTTPPPAEELMATTILQATEALSPEAEASTAL). Thr-2 carries O-linked (GalNAc...) threonine glycosylation. A glycan (O-linked (GalNAc...) serine) is linked at Ser-3. Residues Thr-6, Thr-7, Thr-17, Thr-18, and Thr-23 are each glycosylated (O-linked (GalNAc...) threonine). Residues 37 to 57 (IAVVITVVFLTLLSVVILIFF) form a helical; Signal-anchor for type III membrane protein membrane-spanning segment. Residues 58–97 (YLYKNKGSYVTYEPADGEPGAVVLMENDSAKGREKEEYFI) are Cytoplasmic-facing.

It belongs to the SMAGP family. O-glycosylated. The O-glycan is modified with sialic acid residues.

The protein resides in the cell membrane. Its subcellular location is the cytoplasmic vesicle membrane. In terms of biological role, may play a role in epithelial cell-cell contacts. May play a role in tumor invasiveness and metastasis formation. In Bos taurus (Bovine), this protein is Small cell adhesion glycoprotein (SMAGP).